Reading from the N-terminus, the 20-residue chain is Unknown protein NF028 from 2D-PAGE (20 aa).

The sequence is that of Unknown protein NF028 from 2D-PAGE from Naegleria fowleri (Brain eating amoeba).